Here is a 274-residue protein sequence, read N- to C-terminus: MNKTAIALLALLASSASLAATPWQKITQPVPGSAQSIGSFSNGCIVGADTLPIQSEHYQVMRTDLRRYFGHPDLVMFIQRLSSQVSNLGMGTVLIGDMGMPAGGRFNGGHASHQTGLDVDIFLQLPKTRWTSAQLLRPQALDLVSRDGKHVVPTLWKPEIFSLIKLAAQDKDVTRIFVNPAIKQQLCLDAGTDRDWLRKVRPWFQHRAHMHVRLRCPADSLECEDQPLPPPGDGCGAELQSWFEPPKPGTTKPEKKTPPPLPPSCQALLDEHVI.

Positions 1–19 are cleaved as a signal peptide; the sequence is MNKTAIALLALLASSASLA. Cystine bridges form between C44–C265, C187–C235, and C216–C223. Zn(2+)-binding residues include H110, H113, D120, D147, H150, and H211. Residues 227–274 form a disordered region; it reads PLPPPGDGCGAELQSWFEPPKPGTTKPEKKTPPPLPPSCQALLDEHVI.

Belongs to the peptidase M74 family. Dimer. It depends on Zn(2+) as a cofactor.

It localises to the periplasm. Murein endopeptidase that cleaves the D-alanyl-meso-2,6-diamino-pimelyl amide bond that connects peptidoglycan strands. Likely plays a role in the removal of murein from the sacculus. This is Penicillin-insensitive murein endopeptidase from Escherichia coli (strain SE11).